The following is a 454-amino-acid chain: uncharacterized protein (454 aa).

125–132 (GDVGCGKT) is a binding site for ATP.

Belongs to the AFG1 ATPase family.

This is an uncharacterized protein from Schizosaccharomyces pombe (strain 972 / ATCC 24843) (Fission yeast).